Consider the following 239-residue polypeptide: MPLLLLGETEPLKLERDCRSPVDPWAAASPDLALACLCHCQDLSSGAFPDRGVLGGVLFPTVEMVIKVFVATSSGSIAIRKKQQEVVGFLEANKIDFKELDIAGDEDNRRWMRENVPGEKKPQNGIPLPPQIFNEEQYCGDFDSFFSAKEENIIYSFLGLAPPPDSKGSEKAEEGGETEAQKEGSEDVGNLPEAQEKNEEEGETATEETEEIAMEGAEGEAEEEEETAEGEEPGEDEDS.

An SH3-binding motif is present at residues 124-130; it reads NGIPLPP. The segment at 159 to 239 is disordered; the sequence is GLAPPPDSKG…GEEPGEDEDS (81 aa). The span at 167–185 shows a compositional bias: basic and acidic residues; that stretch reads KGSEKAEEGGETEAQKEGS. Residues 198 to 239 are compositionally biased toward acidic residues; sequence NEEEGETATEETEEIAMEGAEGEAEEEEETAEGEEPGEDEDS.

It belongs to the SH3BGR family. Expressed in heart and skeletal muscle.

The chain is SH3 domain-binding glutamic acid-rich protein (SH3BGR) from Homo sapiens (Human).